Reading from the N-terminus, the 396-residue chain is Flavohemoprotein (396 aa).

A Globin domain is found at 1–136 (MLDAQTIATV…LANVFINREA (136 aa)). Histidine 85 provides a ligand contact to heme b. Active-site charge relay system residues include tyrosine 95 and glutamate 135. The segment at 147–396 (GGWEGTRDFR…YECFGPHKVL (250 aa)) is reductase. An FAD-binding FR-type domain is found at 150-255 (EGTRDFRIVA…VAPAGDFFMA (106 aa)). Residues tyrosine 188 and 204 to 207 (RQYS) each bind FAD. Residue 268 to 273 (GVGQTP) participates in NADP(+) binding. Residue 389–392 (CFGP) coordinates FAD.

This sequence belongs to the globin family. Two-domain flavohemoproteins subfamily. It in the C-terminal section; belongs to the flavoprotein pyridine nucleotide cytochrome reductase family. Monomer. It depends on FAD as a cofactor. Heme b is required as a cofactor.

It localises to the cytoplasm. The enzyme catalyses 2 nitric oxide + NADPH + 2 O2 = 2 nitrate + NADP(+) + H(+). The catalysed reaction is 2 nitric oxide + NADH + 2 O2 = 2 nitrate + NAD(+) + H(+). In terms of biological role, is involved in NO detoxification in an aerobic process, termed nitric oxide dioxygenase (NOD) reaction that utilizes O(2) and NAD(P)H to convert NO to nitrate, which protects the bacterium from various noxious nitrogen compounds. Therefore, plays a central role in the inducible response to nitrosative stress. Its function is as follows. In the presence of oxygen and NADH, HMP has NADH oxidase activity, which leads to the generation of superoxide and H(2)O(2), both in vitro and in vivo, and it has been suggested that HMP might act as an amplifier of superoxide stress. Under anaerobic conditions, HMP also exhibits nitric oxide reductase and FAD reductase activities. However, all these reactions are much lower than NOD activity. Functionally, various electron acceptors are also reduced by HMP in vitro, including dihydropterine, ferrisiderophores, ferric citrate, cytochrome c, nitrite, S-nitrosoglutathione, and alkylhydroperoxides. However, it is unknown if these reactions are of any biological significance in vivo. This is Flavohemoprotein (hmp) from Escherichia coli (strain K12).